The chain runs to 103 residues: Thioredoxin (103 aa).

Residues 1–103 (MVKEITDATF…ELDEVINKYV (103 aa)) form the Thioredoxin domain. Cys-28 and Cys-31 form a disulfide bridge.

The protein belongs to the thioredoxin family.

Its function is as follows. Component of the thioredoxin-thioredoxin reductase system. Participates in various redox reactions through the reversible oxidation of its active center dithiol to a disulfide and catalyzes dithiol-disulfide exchange reactions. The chain is Thioredoxin (trxA) from Listeria innocua serovar 6a (strain ATCC BAA-680 / CLIP 11262).